Here is a 396-residue protein sequence, read N- to C-terminus: NADH-quinone oxidoreductase subunit D 1 (396 aa).

Belongs to the complex I 49 kDa subunit family. NDH-1 is composed of 14 different subunits. Subunits NuoB, C, D, E, F, and G constitute the peripheral sector of the complex.

Its subcellular location is the cell inner membrane. The enzyme catalyses a quinone + NADH + 5 H(+)(in) = a quinol + NAD(+) + 4 H(+)(out). NDH-1 shuttles electrons from NADH, via FMN and iron-sulfur (Fe-S) centers, to quinones in the respiratory chain. The immediate electron acceptor for the enzyme in this species is believed to be ubiquinone. Couples the redox reaction to proton translocation (for every two electrons transferred, four hydrogen ions are translocated across the cytoplasmic membrane), and thus conserves the redox energy in a proton gradient. The chain is NADH-quinone oxidoreductase subunit D 1 from Nitrobacter hamburgensis (strain DSM 10229 / NCIMB 13809 / X14).